The sequence spans 714 residues: Ribonucleoside-diphosphate reductase 2 subunit alpha (714 aa).

Residues Thr161, 177–178 (SC), Gly206, 386–390 (NLCSE), and 588–592 (PTGSI) contribute to the substrate site. A disulfide bridge connects residues Cys178 and Cys415. Catalysis depends on Asn386, which acts as the Proton acceptor. Cys388 functions as the Cysteine radical intermediate in the catalytic mechanism. The Proton acceptor role is filled by Glu390.

This sequence belongs to the ribonucleoside diphosphate reductase large chain family. As to quaternary structure, tetramer of two alpha and two beta subunits.

It carries out the reaction a 2'-deoxyribonucleoside 5'-diphosphate + [thioredoxin]-disulfide + H2O = a ribonucleoside 5'-diphosphate + [thioredoxin]-dithiol. With respect to regulation, under complex allosteric control mediated by deoxynucleoside triphosphates and ATP binding. The type of nucleotide bound at the specificity site determines substrate preference. It seems probable that ATP makes the enzyme reduce CDP and UDP, dGTP favors ADP reduction and dTTP favors GDP reduction. Provides the precursors necessary for DNA synthesis. Catalyzes the biosynthesis of deoxyribonucleotides from the corresponding ribonucleotides. R1E contains the binding sites for both substrates and allosteric effectors and carries out the actual reduction of the ribonucleotide. The polypeptide is Ribonucleoside-diphosphate reductase 2 subunit alpha (nrdE) (Escherichia coli (strain K12)).